Consider the following 35-residue polypeptide: Cupiennin-2a (35 aa).

Lysine amide is present on K35.

As to expression, expressed by the venom gland.

The protein localises to the secreted. This Cupiennius salei (American wandering spider) protein is Cupiennin-2a.